Reading from the N-terminus, the 374-residue chain is F-box/kelch-repeat protein At2g24250 (374 aa).

The region spanning 14 to 63 is the F-box domain; that stretch reads PDWSQLPEELLHIISTHLEDHYFDAVHARSVCRSWRSTFPFPSSLLRQSY. Kelch repeat units lie at residues 100 to 150 and 249 to 301; these read SEYF…PLGH and NFLV…LGNF.

The sequence is that of F-box/kelch-repeat protein At2g24250 from Arabidopsis thaliana (Mouse-ear cress).